The chain runs to 385 residues: Phosphate acyltransferase (385 aa).

Positions 1 to 17 (MAAGTSIGTTPGGSTSP) are enriched in low complexity. Residues 1 to 28 (MAAGTSIGTTPGGSTSPETPPEHGLTGT) are disordered.

This sequence belongs to the PlsX family. In terms of assembly, homodimer. Probably interacts with PlsY.

The protein resides in the cytoplasm. The catalysed reaction is a fatty acyl-[ACP] + phosphate = an acyl phosphate + holo-[ACP]. It participates in lipid metabolism; phospholipid metabolism. Its function is as follows. Catalyzes the reversible formation of acyl-phosphate (acyl-PO(4)) from acyl-[acyl-carrier-protein] (acyl-ACP). This enzyme utilizes acyl-ACP as fatty acyl donor, but not acyl-CoA. The protein is Phosphate acyltransferase of Dinoroseobacter shibae (strain DSM 16493 / NCIMB 14021 / DFL 12).